We begin with the raw amino-acid sequence, 597 residues long: Elongation factor 4 (597 aa).

In terms of domain architecture, tr-type G spans 2–184 (QHIRNFSIIA…SIVARVPPPK (183 aa)). Residues 14–19 (DHGKST) and 131–134 (NKMD) each bind GTP.

It belongs to the TRAFAC class translation factor GTPase superfamily. Classic translation factor GTPase family. LepA subfamily.

It is found in the cell inner membrane. It carries out the reaction GTP + H2O = GDP + phosphate + H(+). Its function is as follows. Required for accurate and efficient protein synthesis under certain stress conditions. May act as a fidelity factor of the translation reaction, by catalyzing a one-codon backward translocation of tRNAs on improperly translocated ribosomes. Back-translocation proceeds from a post-translocation (POST) complex to a pre-translocation (PRE) complex, thus giving elongation factor G a second chance to translocate the tRNAs correctly. Binds to ribosomes in a GTP-dependent manner. The polypeptide is Elongation factor 4 (Bordetella bronchiseptica (strain ATCC BAA-588 / NCTC 13252 / RB50) (Alcaligenes bronchisepticus)).